We begin with the raw amino-acid sequence, 72 residues long: Small ribosomal subunit protein bS18c (72 aa).

Belongs to the bacterial ribosomal protein bS18 family. As to quaternary structure, part of the 30S ribosomal subunit.

Its subcellular location is the plastid. The protein resides in the chloroplast. The chain is Small ribosomal subunit protein bS18c from Phaeodactylum tricornutum (strain CCAP 1055/1).